A 204-amino-acid polypeptide reads, in one-letter code: Outer-membrane lipoprotein carrier protein (204 aa).

Positions 1–21 (MKKYLNLTALLLVGISNVTWA) are cleaved as a signal peptide.

The protein belongs to the LolA family. In terms of assembly, monomer.

The protein localises to the periplasm. In terms of biological role, participates in the translocation of lipoproteins from the inner membrane to the outer membrane. Only forms a complex with a lipoprotein if the residue after the N-terminal Cys is not an aspartate (The Asp acts as a targeting signal to indicate that the lipoprotein should stay in the inner membrane). This chain is Outer-membrane lipoprotein carrier protein, found in Histophilus somni (strain 129Pt) (Haemophilus somnus).